Here is a 361-residue protein sequence, read N- to C-terminus: RLA class I histocompatibility antigen, alpha chain 19-1 (361 aa).

The first 24 residues, 1 to 24 (MGSIPPRTLLLLLAGALTLKDTQA), serve as a signal peptide directing secretion. Positions 25 to 114 (GSHSMRYFYT…ALRYYNQSAA (90 aa)) are alpha-1. Over 25-308 (GSHSMRYFYT…EPPAQPTALI (284 aa)) the chain is Extracellular. N-linked (GlcNAc...) asparagine glycosylation is present at N110. The interval 115–206 (GSHTFQTMFG…EMGKETLQRA (92 aa)) is alpha-2. 2 disulfides stabilise this stretch: C125/C188 and C227/C283. The segment at 207–298 (DPPKAHVTHH…GLPEPLTLTW (92 aa)) is alpha-3. The 89-residue stretch at 209–297 (PKAHVTHHPA…EGLPEPLTLT (89 aa)) folds into the Ig-like C1-type domain. Residues 299 to 308 (EPPAQPTALI) form a connecting peptide region. The helical transmembrane segment at 309–329 (VGIVAGVLGVLLILGAVVAVV) threads the bilayer. Over 330–361 (RRKKHSSDGKGGRYTPAAGGHRDQGSDDSLMP) the chain is Cytoplasmic. Residues 335-361 (SSDGKGGRYTPAAGGHRDQGSDDSLMP) are disordered. A phosphoserine mark is found at S355 and S358.

It belongs to the MHC class I family. As to quaternary structure, heterodimer of an alpha chain and a beta chain (beta-2-microglobulin).

It localises to the membrane. Its function is as follows. Involved in the presentation of foreign antigens to the immune system. In Oryctolagus cuniculus (Rabbit), this protein is RLA class I histocompatibility antigen, alpha chain 19-1.